The chain runs to 103 residues: Small ribosomal subunit protein uS10 (103 aa).

Belongs to the universal ribosomal protein uS10 family. Part of the 30S ribosomal subunit.

Involved in the binding of tRNA to the ribosomes. This Polynucleobacter necessarius subsp. necessarius (strain STIR1) protein is Small ribosomal subunit protein uS10.